Here is a 396-residue protein sequence, read N- to C-terminus: 1-deoxy-D-xylulose 5-phosphate reductoisomerase (396 aa).

NADPH is bound by residues Thr13, Gly14, Ser15, Ile16, and Asn127. Residue Lys128 coordinates 1-deoxy-D-xylulose 5-phosphate. Residue Glu129 coordinates NADPH. Asp153 is a Mn(2+) binding site. 4 residues coordinate 1-deoxy-D-xylulose 5-phosphate: Ser154, Glu155, Ser184, and His207. Glu155 is a binding site for Mn(2+). Position 213 (Gly213) interacts with NADPH. 1-deoxy-D-xylulose 5-phosphate is bound by residues Ser220, Asn225, Lys226, and Glu229. Residue Glu229 participates in Mn(2+) binding.

Belongs to the DXR family. Requires Mg(2+) as cofactor. The cofactor is Mn(2+).

The catalysed reaction is 2-C-methyl-D-erythritol 4-phosphate + NADP(+) = 1-deoxy-D-xylulose 5-phosphate + NADPH + H(+). It participates in isoprenoid biosynthesis; isopentenyl diphosphate biosynthesis via DXP pathway; isopentenyl diphosphate from 1-deoxy-D-xylulose 5-phosphate: step 1/6. Functionally, catalyzes the NADPH-dependent rearrangement and reduction of 1-deoxy-D-xylulose-5-phosphate (DXP) to 2-C-methyl-D-erythritol 4-phosphate (MEP). In Pseudomonas savastanoi pv. phaseolicola (strain 1448A / Race 6) (Pseudomonas syringae pv. phaseolicola (strain 1448A / Race 6)), this protein is 1-deoxy-D-xylulose 5-phosphate reductoisomerase.